Consider the following 262-residue polypeptide: Glutamine-binding protein (262 aa).

A signal peptide spans M1–G26. Residue C27 is the site of N-palmitoyl cysteine attachment. A lipid anchor (S-diacylglycerol cysteine) is attached at C27.

The protein belongs to the bacterial solute-binding protein 3 family.

Its subcellular location is the cell membrane. In terms of biological role, involved in glutamine-transport system. Interacts with the glutamine-transport system GlnPQ. The sequence is that of Glutamine-binding protein (glnH) from Geobacillus stearothermophilus (Bacillus stearothermophilus).